A 505-amino-acid polypeptide reads, in one-letter code: Maturase K (505 aa).

Belongs to the intron maturase 2 family. MatK subfamily.

Its subcellular location is the plastid. The protein resides in the chloroplast. Usually encoded in the trnK tRNA gene intron. Probably assists in splicing its own and other chloroplast group II introns. The sequence is that of Maturase K from Allamanda cathartica (Yellow allamanda).